A 221-amino-acid chain; its full sequence is uncharacterized protein (221 aa).

The next 5 membrane-spanning stretches (helical) occupy residues 2-22, 34-54, 97-117, 131-151, and 177-197; these read FIAK…FFFV, LLTL…LAQA, AYGL…SNVI, ALDQ…FMGI, and ILWP…LQVI.

It belongs to the peroxisomal membrane protein PXMP2/4 family.

The protein resides in the membrane. This is an uncharacterized protein from Schizosaccharomyces pombe (strain 972 / ATCC 24843) (Fission yeast).